Reading from the N-terminus, the 150-residue chain is Ribonuclease H (150 aa).

In terms of domain architecture, RNase H type-1 spans 3 to 144; it reads DKDMIEIWTD…ADGLARKGTD (142 aa). Asp-12, Glu-50, Asp-72, and Asp-136 together coordinate Mg(2+). The interval 129-150 is disordered; sequence DEGNERADGLARKGTDEVRGRK.

It belongs to the RNase H family. In terms of assembly, monomer. Mg(2+) is required as a cofactor.

The protein resides in the cytoplasm. The catalysed reaction is Endonucleolytic cleavage to 5'-phosphomonoester.. In terms of biological role, endonuclease that specifically degrades the RNA of RNA-DNA hybrids. The sequence is that of Ribonuclease H from Hyphomonas neptunium (strain ATCC 15444).